The sequence spans 416 residues: MSLKVFLQAGVACAALSLAGAAGASAEPLKIALVETLSGPQASTGLLYRAAVLYQLGKINEAGGFNGEKIQILEYDNQGGPVGAADRVKAAIADGAQIIVQGSSSAVAGQITEDVRKYNLRNKGKEVLYLNLGAEALELTGSKCHFYHFRFSPNAAIRFKTVAQGMKDKGILGERAYSINQNYSWGVDVENTVVANAKEIGYEVVDKTLHEVNKIQDFSPYVAKIQAANVDTVFTGNWSNDLLLLMKAASGAGLKAKFATSFLDQPGNIGNAGAIAEGHIVSTPFNPEANGEASMAFAEDYKKVTGHYPSYAEPAAVFGLQLFGEALKNVKPGEGKINTTDIALAIENASVKTPMGDYSMRSDDHQAKFPMVVQEVSKKARIKADGTEYGFLPFKTFTGDESIDPVQESCSMKRPG.

The signal sequence occupies residues M1–A26.

Belongs to the leucine-binding protein family.

Functionally, component of an amino-acid transport system. This is Leu/Ile/Val-binding protein homolog 4 from Brucella melitensis biotype 1 (strain ATCC 23456 / CCUG 17765 / NCTC 10094 / 16M).